Reading from the N-terminus, the 60-residue chain is Large ribosomal subunit protein uL30 (60 aa).

It belongs to the universal ribosomal protein uL30 family. As to quaternary structure, part of the 50S ribosomal subunit.

This is Large ribosomal subunit protein uL30 from Xanthobacter autotrophicus (strain ATCC BAA-1158 / Py2).